Here is a 308-residue protein sequence, read N- to C-terminus: Exosporium protein A (308 aa).

It localises to the spore wall. The chain is Exosporium protein A from Clostridium sporogenes (strain ATCC 15579).